A 35-amino-acid polypeptide reads, in one-letter code: uncharacterized protein (35 aa).

The signal sequence occupies residues 1–25; it reads MTERKLLQLLRRPFISLSLFTALRA.

This is an uncharacterized protein from Saccharomyces cerevisiae (strain ATCC 204508 / S288c) (Baker's yeast).